The chain runs to 608 residues: Glutamyl-tRNA(Gln) amidotransferase subunit E (608 aa).

The interval 402-422 (EETRGANPDGTTRFLRPRPGA) is disordered.

Belongs to the GatB/GatE family. GatE subfamily. As to quaternary structure, heterodimer of GatD and GatE.

The enzyme catalyses L-glutamyl-tRNA(Gln) + L-glutamine + ATP + H2O = L-glutaminyl-tRNA(Gln) + L-glutamate + ADP + phosphate + H(+). Allows the formation of correctly charged Gln-tRNA(Gln) through the transamidation of misacylated Glu-tRNA(Gln) in organisms which lack glutaminyl-tRNA synthetase. The reaction takes place in the presence of glutamine and ATP through an activated gamma-phospho-Glu-tRNA(Gln). The GatDE system is specific for glutamate and does not act on aspartate. In Pyrobaculum calidifontis (strain DSM 21063 / JCM 11548 / VA1), this protein is Glutamyl-tRNA(Gln) amidotransferase subunit E.